A 639-amino-acid chain; its full sequence is Versicolorin B synthase stcN (639 aa).

Residues 1 to 19 (MPAWSLLVLSALPVVGMFA) form the signal peptide. Residues 77 to 78 (TA) and 98 to 99 (EA) contribute to the FAD site. Residue asparagine 109 is glycosylated (N-linked (GlcNAc...) asparagine). FAD is bound at residue 164-167 (GAML). N-linked (GlcNAc...) asparagine glycosylation occurs at asparagine 214. A PAS domain is found at 263–301 (GFSNGQLLGRSYITHTIHPKTRRRDTASTSYLQTALRTS). 2 N-linked (GlcNAc...) asparagine glycosylation sites follow: asparagine 444 and asparagine 501. FAD is bound by residues alanine 609 and 620 to 621 (PM).

It belongs to the GMC oxidoreductase family. In terms of assembly, homodimer. FAD is required as a cofactor.

It localises to the cytoplasm. Its subcellular location is the cytosol. The catalysed reaction is (2S-3S)-versiconal hemiacetal = versicolorin B + H2O. The enzyme catalyses (S)-5'-oxoaverantin + H(+) = (1'S,5'S)-averufin + H2O. It functions in the pathway mycotoxin biosynthesis; sterigmatocystin biosynthesis. In terms of biological role, norsolorinic acid reductase; part of the gene cluster that mediates the biosynthesis of sterigmatocystin (ST), a polyketide-derived furanocoumarin which is part of the most toxic and carcinogenic compounds among the known mycotoxins. The first step in the biosynthesis of sterigmatocystin is the production of hexanoate by the fatty acid synthase (FAS) units stcJ and stcK. The polyketide backbone is assembled by the non-reducing polyketide synthase stcA by condensation of the starter hexanoyl-CoA and 7 malonyl-CoA extender units followed by cyclization and release of norsolorinic acid. Norsolorinic acid is the first stable intermediate in the biosynthesis of sterigmatocystin and is converted into averantin (AVN) by the ketoreductase stcE which reduces the hexanoate ketone to an alcohol. Averantin is then oxidized into 5'-hydroxyaverantin (HAVN) by the cytochrome P450 monooxygenase stcF. 5'-hydroxyaverantin is further converted to 5'-oxyaverantin (OAVN) by the 5'-hydroxyaverantin dehydrogenase stcG. The next step is the conversion of OAVN into averufin (AVF) which is catalyzed by a yet to be identified enzyme. The cytochrome P450 monooxygenase stcB and the flavin-binding monooxygenase stcW are both required for the conversion of averufin to 1-hydroxyversicolorone. The esterase stcI probably catalyzes the formation of versiconal hemiacetal acetate from 1-hydroxyversicolorone. The oxydoreductase stcN then probably catalyzes the biosynthetic step from versiconal to versicolorin B (VERB). The next step is performed by the versicolorin B desaturase stcL to produce versicolorin A (VERA). The ketoreductase stcU and the cytochrome P450 monooxygenase stcS are involved in the conversion of versicolorin A to demethylsterigmatocystin. The Baeyer-Villiger oxidas stcQ and the reductase stcR might be involved in the biosynthetic step from versicolorin A to demethylsterigmatocystin. The final step in the biosynthesis of sterigmatocystin is the methylation of demethylsterigmatocystin catalyzed by the methyltransferase stcP. The protein is Versicolorin B synthase stcN of Emericella nidulans (strain FGSC A4 / ATCC 38163 / CBS 112.46 / NRRL 194 / M139) (Aspergillus nidulans).